The sequence spans 503 residues: Maturase K (503 aa).

This sequence belongs to the intron maturase 2 family. MatK subfamily.

Its subcellular location is the plastid. It localises to the chloroplast. Functionally, usually encoded in the trnK tRNA gene intron. Probably assists in splicing its own and other chloroplast group II introns. In Purshia tridentata (Antelope bitterbrush), this protein is Maturase K.